A 357-amino-acid chain; its full sequence is 3-isopropylmalate dehydrogenase (357 aa).

The substrate site is built by R97, R107, R135, and D224. The Mg(2+) site is built by D224, D248, and D252. Position 282–294 (282–294 (GSAPDIAGQDKAN)) interacts with NAD(+).

It belongs to the isocitrate and isopropylmalate dehydrogenases family. LeuB type 1 subfamily. As to quaternary structure, homodimer. Mg(2+) is required as a cofactor. The cofactor is Mn(2+).

The protein localises to the cytoplasm. It catalyses the reaction (2R,3S)-3-isopropylmalate + NAD(+) = 4-methyl-2-oxopentanoate + CO2 + NADH. It functions in the pathway amino-acid biosynthesis; L-leucine biosynthesis; L-leucine from 3-methyl-2-oxobutanoate: step 3/4. In terms of biological role, catalyzes the oxidation of 3-carboxy-2-hydroxy-4-methylpentanoate (3-isopropylmalate) to 3-carboxy-4-methyl-2-oxopentanoate. The product decarboxylates to 4-methyl-2 oxopentanoate. The protein is 3-isopropylmalate dehydrogenase of Synechococcus sp. (strain CC9605).